A 44-amino-acid polypeptide reads, in one-letter code: Cytochrome b559 subunit beta (44 aa).

Residues 19–35 (WLAVHTLGVPTVFFLGA) traverse the membrane as a helical segment. A heme-binding site is contributed by histidine 23.

Belongs to the PsbE/PsbF family. Heterodimer of an alpha subunit and a beta subunit. PSII is composed of 1 copy each of membrane proteins PsbA, PsbB, PsbC, PsbD, PsbE, PsbF, PsbH, PsbI, PsbJ, PsbK, PsbL, PsbM, PsbT, PsbX, PsbY, PsbZ, Psb30/Ycf12, peripheral proteins PsbO, CyanoQ (PsbQ), PsbU, PsbV and a large number of cofactors. It forms dimeric complexes. Requires heme b as cofactor.

It is found in the cellular thylakoid membrane. This b-type cytochrome is tightly associated with the reaction center of photosystem II (PSII). PSII is a light-driven water:plastoquinone oxidoreductase that uses light energy to abstract electrons from H(2)O, generating O(2) and a proton gradient subsequently used for ATP formation. It consists of a core antenna complex that captures photons, and an electron transfer chain that converts photonic excitation into a charge separation. In Trichodesmium erythraeum (strain IMS101), this protein is Cytochrome b559 subunit beta.